A 276-amino-acid polypeptide reads, in one-letter code: Glutamate racemase (276 aa).

Substrate is bound by residues 9–10 (DS) and 41–42 (YG). Cysteine 72 serves as the catalytic Proton donor/acceptor. 73–74 (NT) serves as a coordination point for substrate. Residue cysteine 183 is the Proton donor/acceptor of the active site. 184–185 (TH) lines the substrate pocket.

It belongs to the aspartate/glutamate racemases family.

It catalyses the reaction L-glutamate = D-glutamate. Its pathway is cell wall biogenesis; peptidoglycan biosynthesis. In terms of biological role, provides the (R)-glutamate required for cell wall biosynthesis. This is Glutamate racemase from Shouchella clausii (strain KSM-K16) (Alkalihalobacillus clausii).